The sequence spans 186 residues: Large ribosomal subunit protein bL9 (186 aa).

A disordered region spans residues 153–186; that stretch reads ELRQVKSQSQKSQQQEAKQNEVGEATDSDKADQK. Residues 157-169 show a composition bias toward low complexity; the sequence is VKSQSQKSQQQEA.

It belongs to the bacterial ribosomal protein bL9 family.

Binds to the 23S rRNA. This is Large ribosomal subunit protein bL9 from Wolbachia sp. subsp. Brugia malayi (strain TRS).